Here is a 671-residue protein sequence, read N- to C-terminus: Polyadenylate-binding protein 8 (671 aa).

RRM domains follow at residues 45–123 (TSLY…YSVR), 133–210 (GNIF…PFVH), 224–301 (TNVY…KAQK), and 327–404 (SNLY…LAQR). The segment at 467–526 (LVPGMRPGGSPMPNFFMPMMQQGQQQQQQQQQQQRPGGGRRGALPQPQQPSPMMQQQMHP) is disordered. 2 stretches are compositionally biased toward low complexity: residues 483–501 (MPMMQQGQQQQQQQQQQQR) and 508–525 (GALPQPQQPSPMMQQQMH). Positions 573-650 (PIVALATRLA…AMDVLRSVAQ (78 aa)) constitute a PABC domain.

It belongs to the polyadenylate-binding protein type-1 family. In terms of assembly, interacts with ERD15/CID1. Interacts with Turnip mosaic virus (TuMV) VPg-Pro and RNA-dependent RNA polymerase (RdRp). As to expression, expressed predominantly in immature flowers.

Its subcellular location is the cytoplasm. It localises to the nucleus. Binds the poly(A) tail of mRNA. Appears to be an important mediator of the multiple roles of the poly(A) tail in mRNA biogenesis, stability and translation. During infection with potyvirus TuMV, acts as a potential integral component of the viral replicase complex that could play an important role in the regulation of potyviral RNA-dependent RNA polymerase (RdRp). This is Polyadenylate-binding protein 8 (PAB8) from Arabidopsis thaliana (Mouse-ear cress).